A 227-amino-acid polypeptide reads, in one-letter code: Uracil-DNA glycosylase (227 aa).

Catalysis depends on aspartate 68, which acts as the Proton acceptor.

The protein belongs to the uracil-DNA glycosylase (UDG) superfamily. UNG family.

Its subcellular location is the cytoplasm. It catalyses the reaction Hydrolyzes single-stranded DNA or mismatched double-stranded DNA and polynucleotides, releasing free uracil.. Functionally, excises uracil residues from the DNA which can arise as a result of misincorporation of dUMP residues by DNA polymerase or due to deamination of cytosine. This chain is Uracil-DNA glycosylase, found in Mycolicibacterium paratuberculosis (strain ATCC BAA-968 / K-10) (Mycobacterium paratuberculosis).